We begin with the raw amino-acid sequence, 659 residues long: Threonine--tRNA ligase (659 aa).

Residues 1–61 (MSAVPELRIT…ADGDVVEEIR (61 aa)) enclose the TGS domain. Positions 260-555 (DHRKLGVELD…LLEHYAGAFP (296 aa)) are catalytic. Zn(2+) contacts are provided by Cys-353, His-404, and His-532.

This sequence belongs to the class-II aminoacyl-tRNA synthetase family. As to quaternary structure, homodimer. Requires Zn(2+) as cofactor.

The protein localises to the cytoplasm. It carries out the reaction tRNA(Thr) + L-threonine + ATP = L-threonyl-tRNA(Thr) + AMP + diphosphate + H(+). Its function is as follows. Catalyzes the attachment of threonine to tRNA(Thr) in a two-step reaction: L-threonine is first activated by ATP to form Thr-AMP and then transferred to the acceptor end of tRNA(Thr). Also edits incorrectly charged L-seryl-tRNA(Thr). In Thermobifida fusca (strain YX), this protein is Threonine--tRNA ligase.